Reading from the N-terminus, the 282-residue chain is Polyamine aminopropyltransferase (282 aa).

The PABS domain occupies Ile11–Lys239. Residue Gln36 participates in S-methyl-5'-thioadenosine binding. Spermidine-binding residues include His67 and Asp91. Residues Glu111 and Asp142–Gly143 each bind S-methyl-5'-thioadenosine. Asp160 serves as the catalytic Proton acceptor. Asp160 to Asp163 provides a ligand contact to spermidine. S-methyl-5'-thioadenosine is bound at residue Pro167.

This sequence belongs to the spermidine/spermine synthase family. Homodimer or homotetramer.

Its subcellular location is the cytoplasm. The catalysed reaction is S-adenosyl 3-(methylsulfanyl)propylamine + putrescine = S-methyl-5'-thioadenosine + spermidine + H(+). The protein operates within amine and polyamine biosynthesis; spermidine biosynthesis; spermidine from putrescine: step 1/1. Functionally, catalyzes the irreversible transfer of a propylamine group from the amino donor S-adenosylmethioninamine (decarboxy-AdoMet) to putrescine (1,4-diaminobutane) to yield spermidine. The chain is Polyamine aminopropyltransferase from Thermococcus onnurineus (strain NA1).